The chain runs to 319 residues: Protease HtpX homolog (319 aa).

The next 2 membrane-spanning stretches (helical) occupy residues 6-26 (TAMLLAFMTVLFMAVGYVIGG) and 28-48 (GGMMIALVIAAGMNFFSYWNS). Position 130 (histidine 130) interacts with Zn(2+). The active site involves glutamate 131. Residue histidine 134 coordinates Zn(2+). A run of 2 helical transmembrane segments spans residues 145-165 (LTATLAGAISMLGNFAFFFGG) and 172-192 (PLGFIGVLIAMIVAPLAAMLV). Glutamate 201 serves as a coordination point for Zn(2+). The interval 277–319 (MARETSTGSTAPVRPDNAGRKSRSVPRTGWGRGGSEPPKGPWS) is disordered.

The protein belongs to the peptidase M48B family. Zn(2+) is required as a cofactor.

Its subcellular location is the cell inner membrane. In Rhizobium meliloti (strain 1021) (Ensifer meliloti), this protein is Protease HtpX homolog.